We begin with the raw amino-acid sequence, 245 residues long: 1-(5-phosphoribosyl)-5-[(5-phosphoribosylamino)methylideneamino] imidazole-4-carboxamide isomerase (245 aa).

The active-site Proton acceptor is the aspartate 8. The active-site Proton donor is the aspartate 130.

Belongs to the HisA/HisF family.

It is found in the cytoplasm. It catalyses the reaction 1-(5-phospho-beta-D-ribosyl)-5-[(5-phospho-beta-D-ribosylamino)methylideneamino]imidazole-4-carboxamide = 5-[(5-phospho-1-deoxy-D-ribulos-1-ylimino)methylamino]-1-(5-phospho-beta-D-ribosyl)imidazole-4-carboxamide. It functions in the pathway amino-acid biosynthesis; L-histidine biosynthesis; L-histidine from 5-phospho-alpha-D-ribose 1-diphosphate: step 4/9. The protein is 1-(5-phosphoribosyl)-5-[(5-phosphoribosylamino)methylideneamino] imidazole-4-carboxamide isomerase of Azotobacter vinelandii (strain DJ / ATCC BAA-1303).